Consider the following 463-residue polypeptide: Dopaminechrome tautomerase (463 aa).

This sequence belongs to the major royal jelly protein family.

It localises to the secreted. It catalyses the reaction dopaminechrome = 5,6-dihydroxyindole. The protein operates within pigment biosynthesis; melanin biosynthesis. Its function is as follows. Catalyzes the conversion of dopaminechrome to 5,6-dihydroxyindole in the eumelanin biosynthetic pathway originating from dopamine. Catalyzes tautomerization of dopaminechrome to 5,6-dihydroxyindole during eumelanin biosynthesis. Acts both dopaminechrome and N-methyl dopaminechrome but not on dopachrome or other aminochromes tested. The chain is Dopaminechrome tautomerase from Drosophila melanogaster (Fruit fly).